We begin with the raw amino-acid sequence, 361 residues long: 5-formaminoimidazole-4-carboxamide-1-(beta)-D-ribofuranosyl 5'-monophosphate synthetase (361 aa).

Positions 27 and 94 each coordinate 5-amino-1-(5-phospho-beta-D-ribosyl)imidazole-4-carboxamide. Residues R116 to K348 form the ATP-grasp domain. ATP is bound by residues P146 to C208 and E230. Residue N258 coordinates 5-amino-1-(5-phospho-beta-D-ribosyl)imidazole-4-carboxamide. 2 residues coordinate Mg(2+): Q297 and E310.

Belongs to the phosphohexose mutase family. Mg(2+) is required as a cofactor. It depends on Mn(2+) as a cofactor.

It catalyses the reaction 5-amino-1-(5-phospho-beta-D-ribosyl)imidazole-4-carboxamide + formate + ATP = 5-formamido-1-(5-phospho-D-ribosyl)imidazole-4-carboxamide + ADP + phosphate. The protein operates within purine metabolism; IMP biosynthesis via de novo pathway; 5-formamido-1-(5-phospho-D-ribosyl)imidazole-4-carboxamide from 5-amino-1-(5-phospho-D-ribosyl)imidazole-4-carboxamide (formate route): step 1/1. Functionally, catalyzes the ATP- and formate-dependent formylation of 5-aminoimidazole-4-carboxamide-1-beta-d-ribofuranosyl 5'-monophosphate (AICAR) to 5-formaminoimidazole-4-carboxamide-1-beta-d-ribofuranosyl 5'-monophosphate (FAICAR) in the absence of folates. This is 5-formaminoimidazole-4-carboxamide-1-(beta)-D-ribofuranosyl 5'-monophosphate synthetase from Methanococcus maripaludis (strain C6 / ATCC BAA-1332).